The primary structure comprises 230 residues: Orotidine 5'-phosphate decarboxylase (230 aa).

Substrate is bound by residues D10, K32, 59–68 (DLKFHDIPRT), T116, R177, Q186, G206, and R207. Catalysis depends on K61, which acts as the Proton donor.

Belongs to the OMP decarboxylase family. Type 1 subfamily. As to quaternary structure, homodimer.

The catalysed reaction is orotidine 5'-phosphate + H(+) = UMP + CO2. It participates in pyrimidine metabolism; UMP biosynthesis via de novo pathway; UMP from orotate: step 2/2. Functionally, catalyzes the decarboxylation of orotidine 5'-monophosphate (OMP) to uridine 5'-monophosphate (UMP). The sequence is that of Orotidine 5'-phosphate decarboxylase from Methylacidiphilum infernorum (isolate V4) (Methylokorus infernorum (strain V4)).